Reading from the N-terminus, the 848-residue chain is DNA mismatch repair protein MutS (848 aa).

610-617 is an ATP binding site; the sequence is GPNMGGKS.

Belongs to the DNA mismatch repair MutS family.

In terms of biological role, this protein is involved in the repair of mismatches in DNA. It is possible that it carries out the mismatch recognition step. This protein has a weak ATPase activity. The chain is DNA mismatch repair protein MutS from Francisella philomiragia subsp. philomiragia (strain ATCC 25017 / CCUG 19701 / FSC 153 / O#319-036).